The primary structure comprises 347 residues: Phenylalanine--tRNA ligase alpha subunit (347 aa).

E261 is a Mg(2+) binding site.

It belongs to the class-II aminoacyl-tRNA synthetase family. Phe-tRNA synthetase alpha subunit type 1 subfamily. Tetramer of two alpha and two beta subunits. The cofactor is Mg(2+).

Its subcellular location is the cytoplasm. The enzyme catalyses tRNA(Phe) + L-phenylalanine + ATP = L-phenylalanyl-tRNA(Phe) + AMP + diphosphate + H(+). The polypeptide is Phenylalanine--tRNA ligase alpha subunit (Streptococcus uberis (strain ATCC BAA-854 / 0140J)).